A 339-amino-acid chain; its full sequence is Phosphate acyltransferase (339 aa).

This sequence belongs to the PlsX family. In terms of assembly, homodimer. Probably interacts with PlsY.

Its subcellular location is the cytoplasm. It carries out the reaction a fatty acyl-[ACP] + phosphate = an acyl phosphate + holo-[ACP]. The protein operates within lipid metabolism; phospholipid metabolism. Its function is as follows. Catalyzes the reversible formation of acyl-phosphate (acyl-PO(4)) from acyl-[acyl-carrier-protein] (acyl-ACP). This enzyme utilizes acyl-ACP as fatty acyl donor, but not acyl-CoA. In Acetivibrio thermocellus (strain ATCC 27405 / DSM 1237 / JCM 9322 / NBRC 103400 / NCIMB 10682 / NRRL B-4536 / VPI 7372) (Clostridium thermocellum), this protein is Phosphate acyltransferase.